The following is a 367-amino-acid chain: Glutamate 5-kinase (367 aa).

Lys-10 contributes to the ATP binding site. Residues Ser-50, Asp-137, and Asn-149 each coordinate substrate. ATP is bound by residues 169–170 (TD) and 211–217 (TGGMATK). Residues 275-353 (AGVIIVDNGA…QEISQILGYE (79 aa)) form the PUA domain.

Belongs to the glutamate 5-kinase family.

The protein localises to the cytoplasm. The catalysed reaction is L-glutamate + ATP = L-glutamyl 5-phosphate + ADP. Its pathway is amino-acid biosynthesis; L-proline biosynthesis; L-glutamate 5-semialdehyde from L-glutamate: step 1/2. In terms of biological role, catalyzes the transfer of a phosphate group to glutamate to form L-glutamate 5-phosphate. The chain is Glutamate 5-kinase from Proteus mirabilis (strain HI4320).